The following is a 143-amino-acid chain: MIFMKELFLFLHVVLATFWVGGMLFLSLVVAPYLKDKPQIRNEAFQEVGKRFSLYGTFLSLFLLFVTGLVNTYLIQGGFRPSIHTKLGVFFVVVFISLLHDLWAGKKALYSEKHRVWAKWLGILNLILSLLLVYLGVRIRLGY.

4 helical membrane passes run 7 to 29 (LFLF…LSLV), 52 to 74 (FSLY…NTYL), 87 to 105 (LGVF…LWAG), and 120 to 142 (WLGI…IRLG).

The protein resides in the cell membrane. This is an uncharacterized protein from Aquifex aeolicus (strain VF5).